A 310-amino-acid chain; its full sequence is tRNA uridine(34) hydroxylase (310 aa).

The Rhodanese domain occupies 127–225 (KNQNTIVIDT…YLDEISKEEN (99 aa)). C185 serves as the catalytic Cysteine persulfide intermediate.

The protein belongs to the TrhO family.

The enzyme catalyses uridine(34) in tRNA + AH2 + O2 = 5-hydroxyuridine(34) in tRNA + A + H2O. In terms of biological role, catalyzes oxygen-dependent 5-hydroxyuridine (ho5U) modification at position 34 in tRNAs. In Prochlorococcus marinus (strain MIT 9215), this protein is tRNA uridine(34) hydroxylase.